The following is a 189-amino-acid chain: Ras-like protein 1 (189 aa).

10 to 17 (GAGGVGKS) contacts GTP. Positions 32-40 (YDPTIEDSY) match the Effector region motif. GTP contacts are provided by residues 57–61 (DTAGQ) and 116–119 (NKCD). Cysteine 186 bears the Cysteine methyl ester mark. The S-geranylgeranyl cysteine moiety is linked to residue cysteine 186. A propeptide spans 187–189 (KML) (removed in mature form).

This sequence belongs to the small GTPase superfamily. Ras family.

It is found in the cell membrane. The enzyme catalyses GTP + H2O = GDP + phosphate + H(+). With respect to regulation, alternates between an inactive form bound to GDP and an active form bound to GTP. Activated by a guanine nucleotide-exchange factor (GEF) and inactivated by a GTPase-activating protein (GAP). In terms of biological role, ras proteins bind GDP/GTP and possess intrinsic GTPase activity. Plays a role in eye development by regulating cell growth, survival of postmitotic ommatidial cells and differentiation of photoreceptor cells. During larval development, mediates Ptth/tor signaling leading to the production of ecdysone, a hormone required for the initiation of metamorphosis. The protein is Ras-like protein 1 of Drosophila grimshawi (Hawaiian fruit fly).